Here is a 361-residue protein sequence, read N- to C-terminus: Protein Csal_2339 (361 aa).

Ser91 acts as the Proton acceptor in catalysis. Substrate is bound by residues Gly92 to Ser93 and Gly259 to Thr260.

The protein belongs to the proline racemase family.

The enzyme catalyses trans-4-hydroxy-L-proline = cis-4-hydroxy-D-proline. In terms of biological role, in vitro, catalyzes the epimerization of trans-4-hydroxy-L-proline (t4LHyp) to cis-4-hydroxy-D-proline (c4DHyp), albeit with very low efficiency. The physiological substrate may be different. Displays neither proline racemase activity nor t3LHyp dehydratase activity. This chain is Protein Csal_2339, found in Chromohalobacter salexigens (strain ATCC BAA-138 / DSM 3043 / CIP 106854 / NCIMB 13768 / 1H11).